We begin with the raw amino-acid sequence, 192 residues long: Pyridoxal 5'-phosphate synthase subunit PdxT (192 aa).

Residue 46–48 coordinates L-glutamine; the sequence is GES. The active-site Nucleophile is the cysteine 76. L-glutamine-binding positions include arginine 103 and 131 to 132; that span reads IR. Active-site charge relay system residues include histidine 167 and glutamate 169.

Belongs to the glutaminase PdxT/SNO family. In the presence of PdxS, forms a dodecamer of heterodimers. Only shows activity in the heterodimer.

The enzyme catalyses aldehydo-D-ribose 5-phosphate + D-glyceraldehyde 3-phosphate + L-glutamine = pyridoxal 5'-phosphate + L-glutamate + phosphate + 3 H2O + H(+). The catalysed reaction is L-glutamine + H2O = L-glutamate + NH4(+). It functions in the pathway cofactor biosynthesis; pyridoxal 5'-phosphate biosynthesis. Functionally, catalyzes the hydrolysis of glutamine to glutamate and ammonia as part of the biosynthesis of pyridoxal 5'-phosphate. The resulting ammonia molecule is channeled to the active site of PdxS. The protein is Pyridoxal 5'-phosphate synthase subunit PdxT of Koribacter versatilis (strain Ellin345).